Consider the following 190-residue polypeptide: A-type ATP synthase subunit E (190 aa).

It belongs to the V-ATPase E subunit family. Has multiple subunits with at least A(3), B(3), C, D, E, F, H, I and proteolipid K(x).

The protein localises to the cell membrane. Functionally, component of the A-type ATP synthase that produces ATP from ADP in the presence of a proton gradient across the membrane. The polypeptide is A-type ATP synthase subunit E (Pyrobaculum neutrophilum (strain DSM 2338 / JCM 9278 / NBRC 100436 / V24Sta) (Thermoproteus neutrophilus)).